Here is an 879-residue protein sequence, read N- to C-terminus: Alanine--tRNA ligase (879 aa).

Zn(2+) is bound by residues H567, H571, C669, and H673.

The protein belongs to the class-II aminoacyl-tRNA synthetase family. Requires Zn(2+) as cofactor.

It localises to the cytoplasm. The enzyme catalyses tRNA(Ala) + L-alanine + ATP = L-alanyl-tRNA(Ala) + AMP + diphosphate. Catalyzes the attachment of alanine to tRNA(Ala) in a two-step reaction: alanine is first activated by ATP to form Ala-AMP and then transferred to the acceptor end of tRNA(Ala). Also edits incorrectly charged Ser-tRNA(Ala) and Gly-tRNA(Ala) via its editing domain. The chain is Alanine--tRNA ligase from Lactobacillus helveticus (strain DPC 4571).